The following is a 246-amino-acid chain: Probable transcriptional regulatory protein RD1_2018 (246 aa).

Belongs to the TACO1 family.

The protein resides in the cytoplasm. The polypeptide is Probable transcriptional regulatory protein RD1_2018 (Roseobacter denitrificans (strain ATCC 33942 / OCh 114) (Erythrobacter sp. (strain OCh 114))).